Consider the following 265-residue polypeptide: Oxygen-evolving enhancer protein 2-2, chloroplastic (265 aa).

The N-terminal 79 residues, 1–79 (MASTQCFLHH…VGSKVSPADA (79 aa)), are a transit peptide targeting the chloroplast.

It belongs to the PsbP family.

The protein localises to the plastid. It is found in the chloroplast thylakoid membrane. May be involved in the regulation of photosystem II. The protein is Oxygen-evolving enhancer protein 2-2, chloroplastic (PSBP2) of Nicotiana tabacum (Common tobacco).